A 744-amino-acid polypeptide reads, in one-letter code: Vesicle-fusing ATPase (744 aa).

Position 105 is an N6-acetyllysine (Lys105). Residue Ser207 is modified to Phosphoserine. Tyr259 is modified (phosphotyrosine). Residues 505-510 (NGIIKW) and 545-552 (PHSGKTAL) each bind ATP. Mg(2+) is bound at residue Thr550. Residue Ser569 is modified to Phosphoserine; by CDK16.

It belongs to the AAA ATPase family. As to quaternary structure, homohexamer. Interacts with GABARAP and GABARAPL2. Interacts with GRIA2. Interacts with PLK2, leading to disrupt the interaction with GRIA2. Interacts with MUSK; may regulate MUSK endocytosis and activity. Interacts with CDK16. Requires Mg(2+) as cofactor. Post-translationally, phosphorylation at Ser-569 interferes with homohexamerization.

It localises to the cytoplasm. It carries out the reaction ATP + H2O = ADP + phosphate + H(+). Functionally, required for vesicle-mediated transport. Catalyzes the fusion of transport vesicles within the Golgi cisternae. Is also required for transport from the endoplasmic reticulum to the Golgi stack. Seems to function as a fusion protein required for the delivery of cargo proteins to all compartments of the Golgi stack independent of vesicle origin. Interaction with AMPAR subunit GRIA2 leads to influence GRIA2 membrane cycling. The sequence is that of Vesicle-fusing ATPase (NSF) from Cricetulus griseus (Chinese hamster).